Reading from the N-terminus, the 272-residue chain is Heat stress transcription factor A-7a (272 aa).

The tract at residues 1-26 (MMNPFLPEGCDPPPPPQPMEGLHENA) is disordered. The DNA-binding element occupies 27–121 (PPPFLTKTFE…LLKNIKRRNP (95 aa)). Residues 132 to 186 (ACNELRREKQVLMMEIVSLRQQQQTTKSYIKAMEQRIEGTERKQRQMMSFLARAM) are hydrophobic repeat HR-A/B. The Bipartite nuclear localization signal motif lies at 201–216 (KKIKELEDNESAKRKR). Residues 203-212 (IKELEDNESA) show a composition bias toward basic and acidic residues. Residues 203–223 (IKELEDNESAKRKRGSSSMSE) are disordered. Residues 256-265 (DGFWEELLSD) carry the AHA motif.

It belongs to the HSF family. Class A subfamily. As to quaternary structure, homotrimer. In terms of processing, exhibits temperature-dependent phosphorylation.

The protein localises to the nucleus. Functionally, transcriptional activator that specifically binds DNA sequence 5'-AGAAnnTTCT-3' known as heat shock promoter elements (HSE). In Arabidopsis thaliana (Mouse-ear cress), this protein is Heat stress transcription factor A-7a (HSFA7A).